A 383-amino-acid chain; its full sequence is Cytochrome b (383 aa).

Helical transmembrane passes span 30–50, 74–96, 109–129, and 175–195; these read FGSL…LLAM, WILR…CHIG, TWIV…IGYV, and FFSL…AHLL. Heme b is bound by residues H80 and H94. Residues H179 and H193 each coordinate heme b. H198 contributes to the a ubiquinone binding site. Helical transmembrane passes span 221–241, 289–309, 320–340, and 345–365; these read FTIK…IIGI, GVLA…LDRS, AKFF…IGSA, and EPYV…FLVL.

The protein belongs to the cytochrome b family. The main subunits of complex b-c1 are: cytochrome b, cytochrome c1 and the Rieske protein. The cofactor is heme b.

Its subcellular location is the mitochondrion inner membrane. Component of the ubiquinol-cytochrome c reductase complex (complex III or cytochrome b-c1 complex) that is part of the mitochondrial respiratory chain. The b-c1 complex mediates electron transfer from ubiquinol to cytochrome c. Contributes to the generation of a proton gradient across the mitochondrial membrane that is then used for ATP synthesis. This Trichoplax adhaerens (Trichoplax reptans) protein is Cytochrome b (mt:Cyt-b).